The sequence spans 712 residues: Polyribonucleotide nucleotidyltransferase (712 aa).

Positions 487 and 493 each coordinate Mg(2+). In terms of domain architecture, KH spans 554-613 (PRIEVMNIPVDKIREVIGSGGKVIREIVEKTGAKINIEDDGTVKIASSSGKEIEAARKWI). An S1 motif domain is found at 623-691 (GQIYEGTVVK…ERGKVRLSMK (69 aa)).

Belongs to the polyribonucleotide nucleotidyltransferase family. The cofactor is Mg(2+).

It localises to the cytoplasm. It catalyses the reaction RNA(n+1) + phosphate = RNA(n) + a ribonucleoside 5'-diphosphate. In terms of biological role, involved in mRNA degradation. Catalyzes the phosphorolysis of single-stranded polyribonucleotides processively in the 3'- to 5'-direction. The protein is Polyribonucleotide nucleotidyltransferase of Rhizobium etli (strain CIAT 652).